The primary structure comprises 361 residues: UDP-3-O-acylglucosamine N-acyltransferase (361 aa).

Residue His-258 is the Proton acceptor of the active site.

This sequence belongs to the transferase hexapeptide repeat family. LpxD subfamily. In terms of assembly, homotrimer.

It carries out the reaction a UDP-3-O-[(3R)-3-hydroxyacyl]-alpha-D-glucosamine + a (3R)-hydroxyacyl-[ACP] = a UDP-2-N,3-O-bis[(3R)-3-hydroxyacyl]-alpha-D-glucosamine + holo-[ACP] + H(+). Its pathway is bacterial outer membrane biogenesis; LPS lipid A biosynthesis. In terms of biological role, catalyzes the N-acylation of UDP-3-O-acylglucosamine using 3-hydroxyacyl-ACP as the acyl donor. Is involved in the biosynthesis of lipid A, a phosphorylated glycolipid that anchors the lipopolysaccharide to the outer membrane of the cell. In Nitrobacter hamburgensis (strain DSM 10229 / NCIMB 13809 / X14), this protein is UDP-3-O-acylglucosamine N-acyltransferase.